The primary structure comprises 64 residues: Prokaryotic ubiquitin-like protein Pup (64 aa).

The segment covering 1–10 has biased composition (polar residues); the sequence is MNQNGSQIHS. Positions 1–32 are disordered; that stretch reads MNQNGSQIHSDGNGHSDDTDTPGVSAGQVSVN. An ARC ATPase binding region spans residues 20 to 58; that stretch reads DTPGVSAGQVSVNTAGVDDLLDEIDGLLESNAEEFVRSY. Gln-64 is subject to Deamidated glutamine. An Isoglutamyl lysine isopeptide (Gln-Lys) (interchain with K-? in acceptor proteins) cross-link involves residue Gln-64.

This sequence belongs to the prokaryotic ubiquitin-like protein family. As to quaternary structure, strongly interacts with the proteasome-associated ATPase ARC through a hydrophobic interface; the interacting region of Pup lies in its C-terminal half. There is one Pup binding site per ARC hexamer ring. Post-translationally, is modified by deamidation of its C-terminal glutamine to glutamate by the deamidase Dop, a prerequisite to the subsequent pupylation process.

It functions in the pathway protein degradation; proteasomal Pup-dependent pathway. Functionally, protein modifier that is covalently attached to lysine residues of substrate proteins, thereby targeting them for proteasomal degradation. The tagging system is termed pupylation. This chain is Prokaryotic ubiquitin-like protein Pup, found in Corynebacterium diphtheriae (strain ATCC 700971 / NCTC 13129 / Biotype gravis).